We begin with the raw amino-acid sequence, 294 residues long: Small ribosomal subunit protein uS2 (294 aa).

Residues 254–294 (ESSNTEAPVAETAAAEAPVADAAIEAPVAEEAKTTEADDTK) are disordered. The segment covering 259-282 (EAPVAETAAAEAPVADAAIEAPVA) has biased composition (low complexity). A compositionally biased stretch (basic and acidic residues) spans 283–294 (EEAKTTEADDTK).

This sequence belongs to the universal ribosomal protein uS2 family.

In Renibacterium salmoninarum (strain ATCC 33209 / DSM 20767 / JCM 11484 / NBRC 15589 / NCIMB 2235), this protein is Small ribosomal subunit protein uS2.